A 61-amino-acid polypeptide reads, in one-letter code: Outer membrane lipoprotein YnbE (61 aa).

The signal sequence occupies residues 1-16 (MKILLAALTSSFMLVG). Residue Cys17 is the site of N-palmitoyl cysteine attachment. Cys17 carries the S-diacylglycerol cysteine lipid modification.

The protein belongs to the lipoprotein YnbE family. As to quaternary structure, interacts with the C-terminal region of the probable phospholipid transport protein YdbH.

It localises to the cell outer membrane. Functionally, involved in outer membrane lipid homeostasis. Interacts with the inner membrane protein YdbH to form a functional protein bridge connecting the inner and outer membranes of the cell. Is required for YdbH's function and may facilitate phospholipid transport through the periplasm. This chain is Outer membrane lipoprotein YnbE (ynbE), found in Escherichia coli O6:H1 (strain CFT073 / ATCC 700928 / UPEC).